The chain runs to 114 residues: Cytochrome c oxidase subunit 7A2-like, mitochondrial (114 aa).

The transit peptide at 1 to 55 directs the protein to the mitochondrion; the sequence is MYYKFSGFTQKLAGAWASDAYSPQGLRPVVSTEAPPIIFATPTKLSSGPTAYDYA. The residue at position 69 (K69) is an N6-acetyllysine. A helical membrane pass occupies residues 82 to 107; it reads PDQMLYRTTMALTVGGTIYCLIALYM.

The protein belongs to the cytochrome c oxidase VIIa family. As to quaternary structure, interacts with the mitochondrial respiratory complexes III (CIII) and IV (CIV), promoting their association.

The protein localises to the mitochondrion inner membrane. Its function is as follows. Assembly factor that mediates the formation of some mitochondrial respiratory supercomplexes (respirasomes), thereby promoting oxidative phosphorylation and energy metabolism. Acts as a molecular adapter that associates with both mitochondrial respiratory complexes III (CIII) and IV (CIV), promoting their association. Mediates the formation of various mitochondrial respiratory supercomplexes, such as MCIII(2)IV(2), composed of two CIII and two CIV, and the CS-respirasome (MCI(1)III(2)IV(2)), composed of one CI, two CIII and two CIV. Not involved in the formation of the canonical respirasome (MCI(1)III(2)IV(1)), composed of one CI, two CIII and one CIV. The formation of different respirasomes is important for cell adaptation to oxygen conditions and prevent metabolic exhaustion: supercomplexes mediated by COX7A2L/SCAF1 are required to maintain oxidative phosphorylation upon low oxygen conditions and promote metabolic rewiring toward glycolysis. The polypeptide is Cytochrome c oxidase subunit 7A2-like, mitochondrial (Bos taurus (Bovine)).